The sequence spans 422 residues: UDP-N-acetylglucosamine 1-carboxyvinyltransferase (422 aa).

Residue 24–25 (KN) coordinates phosphoenolpyruvate. Arginine 93 serves as a coordination point for UDP-N-acetyl-alpha-D-glucosamine. Residue cysteine 117 is the Proton donor of the active site. Cysteine 117 carries the 2-(S-cysteinyl)pyruvic acid O-phosphothioketal modification. Residues 122–126 (RPVDL), 162–165 (KVSV), aspartate 307, and isoleucine 329 contribute to the UDP-N-acetyl-alpha-D-glucosamine site.

This sequence belongs to the EPSP synthase family. MurA subfamily.

The protein localises to the cytoplasm. The catalysed reaction is phosphoenolpyruvate + UDP-N-acetyl-alpha-D-glucosamine = UDP-N-acetyl-3-O-(1-carboxyvinyl)-alpha-D-glucosamine + phosphate. The protein operates within cell wall biogenesis; peptidoglycan biosynthesis. In terms of biological role, cell wall formation. Adds enolpyruvyl to UDP-N-acetylglucosamine. The protein is UDP-N-acetylglucosamine 1-carboxyvinyltransferase of Vibrio atlanticus (strain LGP32) (Vibrio splendidus (strain Mel32)).